Reading from the N-terminus, the 917-residue chain is MSAPRIWLAQALLFFLTTESIGQLLEPCGYIYPEFPVVQRGSNFTAICVLKEACLQHYYVNASYIVWKTNHAAVPREQVTVINRTTSSVTFTDVVLPSVQLTCNILSFGQIEQNVYGVTMLSGFPPDKPTNLTCIVNEGKNMLCQWDPGRETYLETNYTLKSEWATEKFPDCQSKHGTSCMVSYMPTYYVNIEVWVEAENALGKVSSESINFDPVDKVKPTPPYNLSVTNSEELSSILKLSWVSSGLGGLLDLKSDIQYRTKDASTWIQVPLEDTMSPRTSFTVQDLKPFTEYVFRIRSIKDSGKGYWSDWSEEASGTTYEDRPSRPPSFWYKTNPSHGQEYRSVRLIWKALPLSEANGKILDYEVILTQSKSVSQTYTVTGTELTVNLTNDRYVASLAARNKVGKSAAAVLTIPSPHVTAAYSVVNLKAFPKDNLLWVEWTPPPKPVSKYILEWCVLSENAPCVEDWQQEDATVNRTHLRGRLLESKCYQITVTPVFATGPGGSESLKAYLKQAAPARGPTVRTKKVGKNEAVLAWDQIPVDDQNGFIRNYSISYRTSVGKEMVVHVDSSHTEYTLSSLSSDTLYMVRMAAYTDEGGKDGPEFTFTTPKFAQGEIEAIVVPVCLAFLLTTLLGVLFCFNKRDLIKKHIWPNVPDPSKSHIAQWSPHTPPRHNFNSKDQMYSDGNFTDVSVVEIEANNKKPCPDDLKSVDLFKKEKVSTEGHSSGIGGSSCMSSSRPSISSNEENESAQSTASTVQYSTVVHSGYRHQVPSVQVFSRSESTQPLLDSEERPEDLQLVDSVDGGDEILPRQPYFKQNCSQPEACPEISHFERSNQVLSGNEEDFVRLKQQQVSDHISQPYGSEQRRLFQEGSTADALGTGADGQMERFESVGMETTIDEEIPKSYLPQTVRQGGYMPQ.

The first 22 residues, 1-22 (MSAPRIWLAQALLFFLTTESIG), serve as a signal peptide directing secretion. The Extracellular portion of the chain corresponds to 23 to 617 (QLLEPCGYIY…TPKFAQGEIE (595 aa)). Positions 26–120 (EPCGYIYPEF…IEQNVYGVTM (95 aa)) constitute an Ig-like C2-type domain. 2 disulfides stabilise this stretch: Cys-28-Cys-54 and Cys-48-Cys-103. Residues Asn-43, Asn-61, Asn-83, and Asn-131 are each glycosylated (N-linked (GlcNAc...) asparagine). Fibronectin type-III domains are found at residues 128-221 (KPTN…VKPT), 222-322 (PPYN…TYED), 327-417 (PPSF…IPSP), 422-515 (AYSV…LKQA), and 517-611 (PARG…TPKF). Cys-134 and Cys-144 are joined by a disulfide. Asn-157 carries N-linked (GlcNAc...) asparagine glycosylation. A disulfide bridge links Cys-172 with Cys-180. Asn-225 carries an N-linked (GlcNAc...) asparagine glycan. Positions 308-312 (WSDWS) match the WSXWS motif motif. N-linked (GlcNAc...) asparagine glycosylation is present at Asn-388. Cys-456 and Cys-464 are oxidised to a cystine. N-linked (GlcNAc...) asparagine glycans are attached at residues Asn-476 and Asn-551. A helical membrane pass occupies residues 618–639 (AIVVPVCLAFLLTTLLGVLFCF). Residues 640-917 (NKRDLIKKHI…TVRQGGYMPQ (278 aa)) are Cytoplasmic-facing. The Box 1 motif motif lies at 649 to 657 (IWPNVPDPS). Disordered regions lie at residues 658-678 (KSHIAQWSPHTPPRHNFNSKD) and 719-754 (TEGHSSGIGGSSCMSSSRPSISSNEENESAQSTAST). Residues Ser-659 and Ser-665 each carry the phosphoserine modification. Residues 729 to 753 (SSCMSSSRPSISSNEENESAQSTAS) are compositionally biased toward low complexity. Ser-780, Ser-787, Ser-827, and Ser-837 each carry phosphoserine. The tract at residues 898 to 917 (EEIPKSYLPQTVRQGGYMPQ) is disordered.

It belongs to the type I cytokine receptor family. Type 2 subfamily. As to quaternary structure, component of a hexamer of two molecules each of IL6, IL6R and IL6ST; associates with the complex IL6:IL6R but does not interact with IL6. Forms heterodimers composed of LIFR and IL6ST (type I OSM receptor) which are activated by LIF and OSM. Also forms heterodimers composed of OSMR and IL6ST (type II receptor) which are activated by OSM but not by LIF. Interacts with HCK. Interacts with INPP5D/SHIP1. Interacts with SRC and YES. Interacts with ARMH4; this interaction prevents IL6ST protein homodimerization and bridges ARMH4 with IL6R and STAT3 and therefore inhibits phosphorylation of STAT3 at 'Tyr-705'. Post-translationally, phosphorylation of Ser-780 down-regulates cell surface expression. In terms of processing, heavily N-glycosylated. Glycosylation is required for protein stability and localization in plasma membrane but not for ligand binding. In terms of tissue distribution, expression not restricted to IL6-responsive cells. Found in tissues such as brain, heart, thymus, spleen, kidney, lung and liver. Found in all the cell lines tested except BaF-B03. Expressed paraventricular nucleus of the hypothalamus.

It localises to the cell membrane. Functionally, signal-transducing molecule. The receptor systems for IL6, LIF, OSM, CNTF, IL11, CTF1 and BSF3 can utilize IL6ST for initiating signal transmission. Binding of IL6 to IL6R induces IL6ST homodimerization and formation of a high-affinity receptor complex, which activates the intracellular JAK-MAPK and JAK-STAT3 signaling pathways. That causes phosphorylation of IL6ST tyrosine residues which in turn activates STAT3. In parallel, the IL6 signaling pathway induces the expression of two cytokine receptor signaling inhibitors, SOCS1 and SOCS3, which inhibit JAK and terminate the activity of the IL6 signaling pathway as a negative feedback loop. Also activates the yes-associated protein 1 (YAP) and NOTCH pathways to control inflammation-induced epithelial regeneration, independently of STAT3. Mediates signals which regulate immune response, hematopoiesis, pain control and bone metabolism. Has a role in embryonic development. Essential for survival of motor and sensory neurons and for differentiation of astrocytes. Required for expression of TRPA1 in nociceptive neurons. Required for the maintenance of PTH1R expression in the osteoblast lineage and for the stimulation of PTH-induced osteoblast differentiation. Required for normal trabecular bone mass and cortical bone composition. In Mus musculus (Mouse), this protein is Interleukin-6 receptor subunit beta.